The sequence spans 115 residues: U3-lycotoxin-Ls1a (115 aa).

The first 20 residues, 1-20 (MKFVLLFGVFLVTLFSYSSA), serve as a signal peptide directing secretion. A propeptide spanning residues 21–44 (EMLDDFGQADEDELLSLIEKEEAR) is cleaved from the precursor. 4 disulfides stabilise this stretch: C48–C63, C55–C72, C62–C87, and C74–C85.

Belongs to the neurotoxin 19 (CSTX) family. 01 subfamily. Expressed by the venom gland.

It localises to the secreted. The sequence is that of U3-lycotoxin-Ls1a from Lycosa singoriensis (Wolf spider).